A 241-amino-acid polypeptide reads, in one-letter code: Triosephosphate isomerase (241 aa).

Position 8 to 10 (8 to 10) interacts with substrate; it reads NWK. Residue His-93 is the Electrophile of the active site. The active-site Proton acceptor is Glu-163. Residues Gly-169, Ser-205, and 226–227 contribute to the substrate site; that span reads GG.

Belongs to the triosephosphate isomerase family. As to quaternary structure, homodimer.

It localises to the cytoplasm. The catalysed reaction is D-glyceraldehyde 3-phosphate = dihydroxyacetone phosphate. Its pathway is carbohydrate biosynthesis; gluconeogenesis. The protein operates within carbohydrate degradation; glycolysis; D-glyceraldehyde 3-phosphate from glycerone phosphate: step 1/1. Its function is as follows. Involved in the gluconeogenesis. Catalyzes stereospecifically the conversion of dihydroxyacetone phosphate (DHAP) to D-glyceraldehyde-3-phosphate (G3P). The protein is Triosephosphate isomerase of Bdellovibrio bacteriovorus (strain ATCC 15356 / DSM 50701 / NCIMB 9529 / HD100).